Reading from the N-terminus, the 379-residue chain is Heme A synthase (379 aa).

The tract at residues 1–28 (MAGSRSIFEEVQDSQKPAAMPGGVSRDR) is disordered. 8 helical membrane passes run 35-55 (VRVF…IGGL), 124-144 (FLGV…SVPV), 150-170 (LLLL…MVHS), 183-203 (RLAV…WYIL), 227-247 (ATGL…VAGI), 287-307 (FFHR…WIMA), 318-338 (AFDW…MTVM), and 341-361 (SPWY…TLIL). Position 289 (His289) interacts with heme. Heme is bound at residue His349.

This sequence belongs to the COX15/CtaA family. Type 2 subfamily. In terms of assembly, interacts with CtaB. The cofactor is heme b.

Its subcellular location is the cell membrane. It catalyses the reaction Fe(II)-heme o + 2 A + H2O = Fe(II)-heme a + 2 AH2. It participates in porphyrin-containing compound metabolism; heme A biosynthesis; heme A from heme O: step 1/1. Functionally, catalyzes the conversion of heme O to heme A by two successive hydroxylations of the methyl group at C8. The first hydroxylation forms heme I, the second hydroxylation results in an unstable dihydroxymethyl group, which spontaneously dehydrates, resulting in the formyl group of heme A. This chain is Heme A synthase, found in Jannaschia sp. (strain CCS1).